The sequence spans 141 residues: Small ribosomal subunit protein uS19 (141 aa).

The protein belongs to the universal ribosomal protein uS19 family.

In terms of biological role, protein S19 forms a complex with S13 that binds strongly to the 16S ribosomal RNA. This Halorubrum lacusprofundi (strain ATCC 49239 / DSM 5036 / JCM 8891 / ACAM 34) protein is Small ribosomal subunit protein uS19.